The sequence spans 154 residues: S-ribosylhomocysteine lyase (154 aa).

3 residues coordinate Fe cation: His-58, His-62, and Cys-125.

This sequence belongs to the LuxS family. In terms of assembly, homodimer. It depends on Fe cation as a cofactor.

The catalysed reaction is S-(5-deoxy-D-ribos-5-yl)-L-homocysteine = (S)-4,5-dihydroxypentane-2,3-dione + L-homocysteine. Its function is as follows. Involved in the synthesis of autoinducer 2 (AI-2) which is secreted by bacteria and is used to communicate both the cell density and the metabolic potential of the environment. The regulation of gene expression in response to changes in cell density is called quorum sensing. Catalyzes the transformation of S-ribosylhomocysteine (RHC) to homocysteine (HC) and 4,5-dihydroxy-2,3-pentadione (DPD). The sequence is that of S-ribosylhomocysteine lyase from Dichelobacter nodosus (strain VCS1703A).